Here is a 587-residue protein sequence, read N- to C-terminus: MYRLISSIASKARVARNCTSQIGSRLSSTRNYAAKDIRFGVEGRALMLRGVEELADAVKVTIPPKGRNVIIEQSWGAPKVTKDGVTVAKSIEFKDRVKNVGASLVKQVANRPTQLNRCLGDGTTCATVLTRAIFTEGCKSVAAGMNAMDLRRGIKLAVDTVVTKLKSRARMISTSEEIAQVGTISANGDRELVTDCKAMESVGKEGVITIQDGKTLFNELEVVEGMKIDRGYISPYFITNQKNQKCELEDPLILIHEKKISNLNSMVKVLELALKSQRSLLIVAADLESDALAVLILNKLRAGIKVCAVKAPGFGENRKANMHDLATLTGAQVITEELGMNLEKIDLSMLGNCKKITVSKDDTVFLGWGAGDKKAIGERCEQIRSMVEASESDYDKEKLQERLAKLSGGVAVLKIGGASESEVGEKKDRVTDALNATKAAVEEGIVPGGGVALLYASKELDKLSTANFDHKIGVQIIQNALKTPVYTIASNAGVEGAVIVGKLLESDNPDLGYDAAKGEYVDMVKSGIIDPVKVIRTALVDAASVSSLLTTTEAVVTEIPTKEDASPAMGGGGGGMGGMGGMGGMGF.

Residues 1–32 constitute a mitochondrion transit peptide; sequence MYRLISSIASKARVARNCTSQIGSRLSSTRNY.

It belongs to the chaperonin (HSP60) family.

The protein resides in the mitochondrion. Functionally, implicated in mitochondrial protein import and macromolecular assembly. May facilitate the correct folding of imported proteins. May also prevent misfolding and promote the refolding and proper assembly of unfolded polypeptides generated under stress conditions in the mitochondrial matrix. This is Chaperonin CPN60, mitochondrial from Brassica napus (Rape).